A 609-amino-acid chain; its full sequence is UvrABC system protein C (609 aa).

The GIY-YIG domain occupies 16-94; that stretch reads SSAGVYRMYD…IKQYMPKYNV (79 aa). Positions 203 to 238 constitute a UVR domain; sequence KQVISELVAKMEEAAEQQAYEQAARFRDQIMALRRV.

This sequence belongs to the UvrC family. As to quaternary structure, interacts with UvrB in an incision complex.

The protein localises to the cytoplasm. In terms of biological role, the UvrABC repair system catalyzes the recognition and processing of DNA lesions. UvrC both incises the 5' and 3' sides of the lesion. The N-terminal half is responsible for the 3' incision and the C-terminal half is responsible for the 5' incision. The polypeptide is UvrABC system protein C (Shewanella oneidensis (strain ATCC 700550 / JCM 31522 / CIP 106686 / LMG 19005 / NCIMB 14063 / MR-1)).